We begin with the raw amino-acid sequence, 123 residues long: Holo-[acyl-carrier-protein] synthase (123 aa).

Mg(2+) contacts are provided by aspartate 8 and glutamate 55.

The protein belongs to the P-Pant transferase superfamily. AcpS family. Requires Mg(2+) as cofactor.

It localises to the cytoplasm. The catalysed reaction is apo-[ACP] + CoA = holo-[ACP] + adenosine 3',5'-bisphosphate + H(+). Its function is as follows. Transfers the 4'-phosphopantetheine moiety from coenzyme A to a Ser of acyl-carrier-protein. The protein is Holo-[acyl-carrier-protein] synthase of Solidesulfovibrio magneticus (strain ATCC 700980 / DSM 13731 / RS-1) (Desulfovibrio magneticus).